Consider the following 329-residue polypeptide: Holliday junction branch migration complex subunit RuvB (329 aa).

The interval Met-1 to Leu-20 is disordered. A large ATPase domain (RuvB-L) region spans residues Met-1–Tyr-181. The span at Glu-11–Leu-20 shows a compositional bias: basic and acidic residues. ATP is bound by residues Leu-20, Arg-21, Gly-62, Lys-65, Thr-66, Thr-67, Glu-128–Tyr-130, Arg-171, Tyr-181, and Arg-218. Thr-66 lines the Mg(2+) pocket. The segment at Asp-182 to Gly-252 is small ATPAse domain (RuvB-S). The tract at residues Gln-255 to Lys-329 is head domain (RuvB-H). Arg-291, Lys-310, and Arg-315 together coordinate DNA.

It belongs to the RuvB family. As to quaternary structure, homohexamer. Forms an RuvA(8)-RuvB(12)-Holliday junction (HJ) complex. HJ DNA is sandwiched between 2 RuvA tetramers; dsDNA enters through RuvA and exits via RuvB. An RuvB hexamer assembles on each DNA strand where it exits the tetramer. Each RuvB hexamer is contacted by two RuvA subunits (via domain III) on 2 adjacent RuvB subunits; this complex drives branch migration. In the full resolvosome a probable DNA-RuvA(4)-RuvB(12)-RuvC(2) complex forms which resolves the HJ.

Its subcellular location is the cytoplasm. The catalysed reaction is ATP + H2O = ADP + phosphate + H(+). The RuvA-RuvB-RuvC complex processes Holliday junction (HJ) DNA during genetic recombination and DNA repair, while the RuvA-RuvB complex plays an important role in the rescue of blocked DNA replication forks via replication fork reversal (RFR). RuvA specifically binds to HJ cruciform DNA, conferring on it an open structure. The RuvB hexamer acts as an ATP-dependent pump, pulling dsDNA into and through the RuvAB complex. RuvB forms 2 homohexamers on either side of HJ DNA bound by 1 or 2 RuvA tetramers; 4 subunits per hexamer contact DNA at a time. Coordinated motions by a converter formed by DNA-disengaged RuvB subunits stimulates ATP hydrolysis and nucleotide exchange. Immobilization of the converter enables RuvB to convert the ATP-contained energy into a lever motion, pulling 2 nucleotides of DNA out of the RuvA tetramer per ATP hydrolyzed, thus driving DNA branch migration. The RuvB motors rotate together with the DNA substrate, which together with the progressing nucleotide cycle form the mechanistic basis for DNA recombination by continuous HJ branch migration. Branch migration allows RuvC to scan DNA until it finds its consensus sequence, where it cleaves and resolves cruciform DNA. The protein is Holliday junction branch migration complex subunit RuvB of Bdellovibrio bacteriovorus (strain ATCC 15356 / DSM 50701 / NCIMB 9529 / HD100).